Here is a 144-residue protein sequence, read N- to C-terminus: 3-dehydroquinate dehydratase (144 aa).

Tyr24 serves as the catalytic Proton acceptor. Substrate is bound by residues Asn76, His82, and Asp89. Residue His102 is the Proton donor of the active site. Residues 103 to 104 (LS) and Arg113 contribute to the substrate site.

The protein belongs to the type-II 3-dehydroquinase family. Homododecamer.

The catalysed reaction is 3-dehydroquinate = 3-dehydroshikimate + H2O. The protein operates within metabolic intermediate biosynthesis; chorismate biosynthesis; chorismate from D-erythrose 4-phosphate and phosphoenolpyruvate: step 3/7. Its function is as follows. Catalyzes a trans-dehydration via an enolate intermediate. The polypeptide is 3-dehydroquinate dehydratase (Bordetella petrii (strain ATCC BAA-461 / DSM 12804 / CCUG 43448)).